A 228-amino-acid chain; its full sequence is Gliolectin (228 aa).

The Cytoplasmic portion of the chain corresponds to 1-120 (MLCPPMALGP…NPKAVSQAPR (120 aa)). The helical; Signal-anchor for type II membrane protein transmembrane segment at 121–137 (GMALTPAQISASAKLIL) threads the bilayer. Topologically, residues 138–228 (QKCPESDRKK…GTSELADQKQ (91 aa)) are extracellular. Residues 141-228 (PESDRKKSNG…GTSELADQKQ (88 aa)) are disordered. Asn149, Asn156, Asn198, Asn199, Asn205, and Asn218 each carry an N-linked (GlcNAc...) asparagine glycan. Residues 195 to 213 (NNNNNSSSSNNNSNMNINN) are compositionally biased toward low complexity. Positions 218–228 (NGTSELADQKQ) are enriched in polar residues.

In terms of tissue distribution, expressed by a subset of glial cells found at the midline of the embryo stage 12 nervous system. Expression is highest during the formation of the embryonic axonal commissures, a process requiring midline glial cell function (at protein level).

The protein localises to the membrane. Functionally, has a role in intercellular carbohydrate-mediated cell adhesion. The sequence is that of Gliolectin from Drosophila melanogaster (Fruit fly).